The primary structure comprises 138 residues: Nucleoside diphosphate kinase (138 aa).

The ATP site is built by Lys11, Phe59, Arg87, Thr93, Arg104, and Asn114. His117 functions as the Pros-phosphohistidine intermediate in the catalytic mechanism.

Belongs to the NDK family. Mg(2+) is required as a cofactor.

Its subcellular location is the cytoplasm. It carries out the reaction a 2'-deoxyribonucleoside 5'-diphosphate + ATP = a 2'-deoxyribonucleoside 5'-triphosphate + ADP. The catalysed reaction is a ribonucleoside 5'-diphosphate + ATP = a ribonucleoside 5'-triphosphate + ADP. Its function is as follows. Major role in the synthesis of nucleoside triphosphates other than ATP. The ATP gamma phosphate is transferred to the NDP beta phosphate via a ping-pong mechanism, using a phosphorylated active-site intermediate. The protein is Nucleoside diphosphate kinase of Saccharolobus islandicus (strain Y.N.15.51 / Yellowstone #2) (Sulfolobus islandicus).